Reading from the N-terminus, the 123-residue chain is Anti-lipopolysaccharide factor (123 aa).

An N-terminal signal peptide occupies residues 1-26 (MRKGVVAGLCLALVVMCLYLPQPCEA). N-linked (GlcNAc...) asparagine glycosylation occurs at Asn45. Cys55 and Cys76 form a disulfide bridge.

As to expression, isoform 1 is highly expressed in muscle and stomach, moderately in heart and gill and at lower levels in hemocytes and hepatopancreas. Isoform 2 is mainly expressed in gill, hepatopancreas, muscle and eyestalk.

It is found in the secreted. Its function is as follows. May bind to bacterial LPS and thus specifically inhibit the LPS-mediated activation of the hemolymph coagulation. It has a strong antibacterial effect especially on the growth of Gram-negative bacteria. The polypeptide is Anti-lipopolysaccharide factor (Portunus trituberculatus (Swimming crab)).